Reading from the N-terminus, the 415-residue chain is DNA polymerase IV 2 (415 aa).

In terms of domain architecture, UmuC spans 7-183 (ILHADLDAFY…LPVSLMWGVG (177 aa)). Residues aspartate 11 and aspartate 101 each contribute to the Mg(2+) site. Glutamate 102 is an active-site residue.

The protein belongs to the DNA polymerase type-Y family. As to quaternary structure, monomer. Requires Mg(2+) as cofactor.

The protein resides in the cytoplasm. It catalyses the reaction DNA(n) + a 2'-deoxyribonucleoside 5'-triphosphate = DNA(n+1) + diphosphate. In terms of biological role, poorly processive, error-prone DNA polymerase involved in untargeted mutagenesis. Copies undamaged DNA at stalled replication forks, which arise in vivo from mismatched or misaligned primer ends. These misaligned primers can be extended by PolIV. Exhibits no 3'-5' exonuclease (proofreading) activity. May be involved in translesional synthesis, in conjunction with the beta clamp from PolIII. This is DNA polymerase IV 2 (dinB2) from Mesorhizobium japonicum (strain LMG 29417 / CECT 9101 / MAFF 303099) (Mesorhizobium loti (strain MAFF 303099)).